The chain runs to 454 residues: Tetrahydroanabasine acetyltransferase (454 aa).

Active-site proton acceptor residues include H164 and D389.

It belongs to the plant acyltransferase family. In terms of assembly, monomer.

It carries out the reaction tetrahydroanabasine + acetyl-CoA = ammodendrine + CoA. It participates in alkaloid biosynthesis. Its function is as follows. Tetrahydroanabasine acetyltransferase involved in the accumulation of quinolizidine type antinutritional alkaloids (QAs) natural products. QAs impart a bitter taste to plants, acting as repellents and toxicants for herbivores and predators, and possess a variety of pharmacological effects, including sedative, anticonvulsant, anti-inflammatory, antiviral, antitumor, antipyretic, anti-hepatitis B, antifibrotic, antiallergic, antidiarrheal, analgesic and antimicrobial activities. Mediates the conversion of tetrahydroanabasine into ammodendrine. The sequence is that of Tetrahydroanabasine acetyltransferase from Lupinus albus (White lupine).